We begin with the raw amino-acid sequence, 424 residues long: Light-independent protochlorophyllide reductase subunit N (424 aa).

Residues Cys-16, Cys-41, and Cys-102 each contribute to the [4Fe-4S] cluster site.

The protein belongs to the BchN/ChlN family. In terms of assembly, protochlorophyllide reductase is composed of three subunits; ChlL, ChlN and ChlB. Forms a heterotetramer of two ChlB and two ChlN subunits. The cofactor is [4Fe-4S] cluster.

The catalysed reaction is chlorophyllide a + oxidized 2[4Fe-4S]-[ferredoxin] + 2 ADP + 2 phosphate = protochlorophyllide a + reduced 2[4Fe-4S]-[ferredoxin] + 2 ATP + 2 H2O. It functions in the pathway porphyrin-containing compound metabolism; chlorophyll biosynthesis (light-independent). Its function is as follows. Component of the dark-operative protochlorophyllide reductase (DPOR) that uses Mg-ATP and reduced ferredoxin to reduce ring D of protochlorophyllide (Pchlide) to form chlorophyllide a (Chlide). This reaction is light-independent. The NB-protein (ChlN-ChlB) is the catalytic component of the complex. The protein is Light-independent protochlorophyllide reductase subunit N of Synechococcus sp. (strain WH7803).